The primary structure comprises 134 residues: MGLIVYYSSRSENTHRFVARLGLRAARIPASGADAFHIREPFVLVVPTYSSGDGKGAVPKQVIRCLNDAENRKHIRGVIAAGNSNFGETYGLAGDVISRKCQVPYLYRFELMGTEEDVANVKHGMERFWTREQL.

The protein belongs to the NrdI family.

Its function is as follows. Probably involved in ribonucleotide reductase function. The chain is Protein NrdI from Rhizobium etli (strain CIAT 652).